The primary structure comprises 67 residues: MRLKHNGRKSPIMNCSKRTDRKSILSPLIFRQQMILIQNLNQKLKTIKACLYQTWKLSRLKALYRSL.

Belongs to the rhabdoviruses C protein family.

Its function is as follows. Seems to stimulates transcription by the viral polymerase. May play a role in viral pathogenesis or transmission by insects vectors. The chain is Protein C' (P) from Vesicular stomatitis Indiana virus (strain 94GUB Central America) (VSIV).